Reading from the N-terminus, the 330-residue chain is ADP-L-glycero-D-manno-heptose-6-epimerase (330 aa).

NADP(+) is bound by residues 11-12 (FI), 32-33 (DD), Gln39, Gln54, 75-79 (QGACA), and Asn92. Tyr139 (proton acceptor) is an active-site residue. Lys143 serves as a coordination point for NADP(+). Asn168 is a substrate binding site. Positions 169 and 177 each coordinate NADP(+). Lys177 functions as the Proton acceptor in the catalytic mechanism. Residues Arg179, His186, 200-203 (FGEH), Arg213, and Tyr292 contribute to the substrate site.

It belongs to the NAD(P)-dependent epimerase/dehydratase family. HldD subfamily. Homopentamer. NADP(+) serves as cofactor.

The enzyme catalyses ADP-D-glycero-beta-D-manno-heptose = ADP-L-glycero-beta-D-manno-heptose. The protein operates within nucleotide-sugar biosynthesis; ADP-L-glycero-beta-D-manno-heptose biosynthesis; ADP-L-glycero-beta-D-manno-heptose from D-glycero-beta-D-manno-heptose 7-phosphate: step 4/4. Its function is as follows. Catalyzes the interconversion between ADP-D-glycero-beta-D-manno-heptose and ADP-L-glycero-beta-D-manno-heptose via an epimerization at carbon 6 of the heptose. The sequence is that of ADP-L-glycero-D-manno-heptose-6-epimerase from Pseudomonas paraeruginosa (strain DSM 24068 / PA7) (Pseudomonas aeruginosa (strain PA7)).